The following is a 31-amino-acid chain: Photosystem II reaction center protein T (31 aa).

The helical transmembrane segment at 3–23 threads the bilayer; that stretch reads ALVYTFLLIGTLGIIFFAIFF.

The protein belongs to the PsbT family. As to quaternary structure, PSII is composed of 1 copy each of membrane proteins PsbA, PsbB, PsbC, PsbD, PsbE, PsbF, PsbH, PsbI, PsbJ, PsbK, PsbL, PsbM, PsbT, PsbY, PsbZ, Psb30/Ycf12, at least 3 peripheral proteins of the oxygen-evolving complex and a large number of cofactors. It forms dimeric complexes.

It localises to the plastid. Its subcellular location is the chloroplast thylakoid membrane. In terms of biological role, found at the monomer-monomer interface of the photosystem II (PS II) dimer, plays a role in assembly and dimerization of PSII. PSII is a light-driven water plastoquinone oxidoreductase, using light energy to abstract electrons from H(2)O, generating a proton gradient subsequently used for ATP formation. The sequence is that of Photosystem II reaction center protein T from Stigeoclonium helveticum (Green alga).